Consider the following 264-residue polypeptide: Thymidylate synthase (264 aa).

Arg21 is a binding site for dUMP. Position 51 (His51) interacts with (6R)-5,10-methylene-5,6,7,8-tetrahydrofolate. 126–127 (RR) is a binding site for dUMP. Cys146 serves as the catalytic Nucleophile. DUMP-binding positions include 166–169 (RSAD), Asn177, and 207–209 (HLY). Asp169 serves as a coordination point for (6R)-5,10-methylene-5,6,7,8-tetrahydrofolate. Position 263 (Ala263) interacts with (6R)-5,10-methylene-5,6,7,8-tetrahydrofolate.

It belongs to the thymidylate synthase family. Bacterial-type ThyA subfamily. As to quaternary structure, homodimer.

It is found in the cytoplasm. The enzyme catalyses dUMP + (6R)-5,10-methylene-5,6,7,8-tetrahydrofolate = 7,8-dihydrofolate + dTMP. Its pathway is pyrimidine metabolism; dTTP biosynthesis. Functionally, catalyzes the reductive methylation of 2'-deoxyuridine-5'-monophosphate (dUMP) to 2'-deoxythymidine-5'-monophosphate (dTMP) while utilizing 5,10-methylenetetrahydrofolate (mTHF) as the methyl donor and reductant in the reaction, yielding dihydrofolate (DHF) as a by-product. This enzymatic reaction provides an intracellular de novo source of dTMP, an essential precursor for DNA biosynthesis. The sequence is that of Thymidylate synthase from Cytophaga hutchinsonii (strain ATCC 33406 / DSM 1761 / CIP 103989 / NBRC 15051 / NCIMB 9469 / D465).